The sequence spans 86 residues: Small ribosomal subunit protein bS16 (86 aa).

It belongs to the bacterial ribosomal protein bS16 family.

The polypeptide is Small ribosomal subunit protein bS16 (Thermoanaerobacter pseudethanolicus (strain ATCC 33223 / 39E) (Clostridium thermohydrosulfuricum)).